The sequence spans 991 residues: Ribonuclease TUDOR 1 (991 aa).

Alanine 2 carries the N-acetylalanine modification. TNase-like domains follow at residues 8–151 (QWLK…RWSK), 186–364 (KPME…MWAN), 378–557 (QNFT…IHSA), and 587–714 (RRIP…IWEN). The disordered stretch occupies residues 227-250 (RTTNGSVVETVPDEPNGDVSAESR). The region spanning 782 to 847 (NPKRGDIVLA…RPIDPSVSAA (66 aa)) is the Tudor domain. The residue at position 970 (tyrosine 970) is a Phosphotyrosine. Residues 971–991 (GDIESDDEDTGPARKPAGGRR) are disordered. Serine 975 is modified (phosphoserine). Threonine 980 bears the Phosphothreonine mark.

Expressed in seeds, leaves, flowers, roots and siliques (at protein level). Accumulates in the cap and elongation zone of the root apices (at protein level).

Its subcellular location is the cytoplasm. It localises to the cytoplasmic granule. The protein localises to the perinuclear region. It is found in the endoplasmic reticulum. With respect to regulation, repressed by the specific inhibitor 3',5'-deoxythymidine bisphosphate (pdTp); this RNase activity inhibition impairs subcellular relocation upon abiotic stress and leads to reduced stress resistance. Its function is as follows. Cytoprotective ribonuclease (RNase) required for resistance to abiotic stresses, acting as a positive regulator of mRNA decapping during stress. Essential for the integrity and function of cytoplasmic messenger ribonucleoprotein (mRNP) complexes called stress granules (SGs) and processing bodies (PBs), sites of post-transcriptional gene regulation during stress (e.g. salt and heat). Involved in gibberellic acid (GA) biosynthesis. Essential for stress tolerance, probably by regulating mRNAs entering the secretory pathway. Component of stress granules (SGs) that regulates growth under salt stress by modulating levels of GA20OX3 mRNA. Binds GA20OX3 mRNA. May inhibit the degradation of mRNAs involved in stress adaptation. The chain is Ribonuclease TUDOR 1 from Arabidopsis thaliana (Mouse-ear cress).